Consider the following 524-residue polypeptide: CDC50-related protein CDC50.1 (524 aa).

Composition is skewed to polar residues over residues 1–19 (MGEN…SQFS) and 26–39 (TLSS…QQSL). Disordered regions lie at residues 1–40 (MGEN…QSLP) and 52–86 (APSV…DAGS). At 1–181 (MGENSTTGLR…GMYPLWSAGV (181 aa)) the chain is on the cytoplasmic side. A compositionally biased stretch (low complexity) spans 67–80 (GSSRLTSRGTSLSS). A helical transmembrane segment spans residues 182–202 (VLRLCLLGALFFVSVGAWLIF). At 203–473 (EDEQHVECKL…VQKSRLGGRS (271 aa)) the chain is on the extracellular side. 2 N-linked (GlcNAc...) asparagine glycosylation sites follow: Asn-297 and Asn-339. Residues 474–494 (LFIGIAYLSFGCLLTMLVFYM) traverse the membrane as a helical segment. At 495 to 524 (LWKKWQYRREGEEIRDLRWQTKTRGSKKTK) the chain is on the cytoplasmic side.

This sequence belongs to the CDC50/LEM3 family. In terms of assembly, interacts with GC; the interaction regulates guanylate cyclase GC trafficking and sensing environmental changes.

It localises to the membrane. In terms of biological role, in tachyzoites, required for the cellular trafficking of guanylate cyclase GC and UGO to the cell membrane. May play a role in the folding of the GC P-type ATPase-like domain to sense vacuolar changes in phosphatidic acid and pH levels which trigger parasite egress. In Toxoplasma gondii (strain ATCC 50853 / GT1), this protein is CDC50-related protein CDC50.1.